We begin with the raw amino-acid sequence, 510 residues long: Protein ERGIC-53 (510 aa).

The signal sequence occupies residues 1–30 (MAGSRQRGLRARVRPLFCALLLSLGRFVRG). Residues 31–477 (DGVGGDPAVA…ELPPFPSCLS (447 aa)) lie on the Lumenal side of the membrane. One can recognise an L-type lectin-like domain in the interval 44–267 (RRFEYKYSFK…DVLSFLTFQL (224 aa)). Residues S88 and D121 each coordinate a carbohydrate. Ca(2+)-binding residues include D152, F154, and N156. A carbohydrate-binding residues include N156 and H178. D181 lines the Ca(2+) pocket. C190 and C230 are joined by a disulfide. 251–253 (GGL) provides a ligand contact to a carbohydrate. The residue at position 425 (S425) is a Phosphoserine. Residues 478 to 498 (TVHFIIFVVVQTVLFIGYIMY) form a helical membrane-spanning segment. The Cytoplasmic portion of the chain corresponds to 499–510 (RSQQEAAAKKFF). Residues 499-510 (RSQQEAAAKKFF) are mediates interaction with RAB3GAP1, RAB3GAP2 and UBXN6. The short motif at 509–510 (FF) is the ER export motif element.

In terms of assembly, exists both as a covalent disulfide-linked homohexamer, and a complex of three disulfide-linked dimers non-covalently kept together. Interacts with MCFD2. May interact with TMEM115. Interacts with RAB3GAP1 and RAB3GAP2. Interacts with UBXN6. Interacts with SERPINA1/alpha1-antitrypsin. Interacts with BET1. In terms of processing, the N-terminal may be partly blocked. As to expression, ubiquitous.

It is found in the endoplasmic reticulum-Golgi intermediate compartment membrane. Its subcellular location is the golgi apparatus membrane. The protein resides in the endoplasmic reticulum membrane. Its function is as follows. Mannose-specific lectin. May recognize sugar residues of glycoproteins, glycolipids, or glycosylphosphatidyl inositol anchors and may be involved in the sorting or recycling of proteins, lipids, or both. The LMAN1-MCFD2 complex forms a specific cargo receptor for the ER-to-Golgi transport of selected proteins. The polypeptide is Protein ERGIC-53 (LMAN1) (Homo sapiens (Human)).